A 194-amino-acid chain; its full sequence is Ribonuclease HII (194 aa).

The 191-residue stretch at 3–193 (ILTAGVDEAG…VRNLFAQQAL (191 aa)) folds into the RNase H type-2 domain. Positions 9, 10, and 101 each coordinate a divalent metal cation.

This sequence belongs to the RNase HII family. The cofactor is Mn(2+). Mg(2+) serves as cofactor.

The protein resides in the cytoplasm. It catalyses the reaction Endonucleolytic cleavage to 5'-phosphomonoester.. Functionally, endonuclease that specifically degrades the RNA of RNA-DNA hybrids. In Neisseria meningitidis serogroup C / serotype 2a (strain ATCC 700532 / DSM 15464 / FAM18), this protein is Ribonuclease HII.